We begin with the raw amino-acid sequence, 283 residues long: Acetylglutamate kinase (283 aa).

Residues 64–65 (GG), R86, and N178 each bind substrate.

Belongs to the acetylglutamate kinase family. ArgB subfamily.

The protein resides in the cytoplasm. It carries out the reaction N-acetyl-L-glutamate + ATP = N-acetyl-L-glutamyl 5-phosphate + ADP. It participates in amino-acid biosynthesis; L-arginine biosynthesis; N(2)-acetyl-L-ornithine from L-glutamate: step 2/4. In terms of biological role, catalyzes the ATP-dependent phosphorylation of N-acetyl-L-glutamate. In Lactococcus lactis subsp. lactis (strain IL1403) (Streptococcus lactis), this protein is Acetylglutamate kinase.